The sequence spans 198 residues: Peptide methionine sulfoxide reductase MsrA 2 (198 aa).

The active site involves Cys32.

It belongs to the MsrA Met sulfoxide reductase family.

The enzyme catalyses L-methionyl-[protein] + [thioredoxin]-disulfide + H2O = L-methionyl-(S)-S-oxide-[protein] + [thioredoxin]-dithiol. The catalysed reaction is [thioredoxin]-disulfide + L-methionine + H2O = L-methionine (S)-S-oxide + [thioredoxin]-dithiol. Has an important function as a repair enzyme for proteins that have been inactivated by oxidation. Catalyzes the reversible oxidation-reduction of methionine sulfoxide in proteins to methionine. This chain is Peptide methionine sulfoxide reductase MsrA 2 (msrA2), found in Rhizobium meliloti (strain 1021) (Ensifer meliloti).